Here is a 445-residue protein sequence, read N- to C-terminus: RCC1 domain-containing protein RUG3, mitochondrial (445 aa).

The N-terminal 22 residues, 1 to 22 (MAALSHRLRSFTRRFSSTRTTQ), are a transit peptide targeting the mitochondrion. RCC1 repeat units lie at residues 47–101 (TLQL…DSSS), 118–169 (DGDL…ALTH), 171–221 (GDVF…AITE), 222–279 (SGEL…ALTK), 280–331 (EGQL…ALTE), 333–383 (GKVL…AITD), and 385–442 (GELW…CLVS).

As to quaternary structure, interacts with ATM. As to expression, mostly expressed in roots and rosette leaves of young seedlings, and, to a lower extent, in the flowers and siliques of mature plants. Preferentially expressed in the vascular tissues.

It is found in the mitochondrion. Its function is as follows. Regulates DNA damage response (DDR) synergistically with ATM. Together with ATM, involved in the splicing of the ND2/NAD2 mRNA. Required for the accumulation of mitochondrial respiratory chain complex I. Negative regulator of plant responses to abscisic acid (ABA). May have a pivotal role in vegetative growth and the phase transition from vegetative to reproductive growth. This chain is RCC1 domain-containing protein RUG3, mitochondrial, found in Arabidopsis thaliana (Mouse-ear cress).